The sequence spans 184 residues: ATP synthase subunit delta (184 aa).

This sequence belongs to the ATPase delta chain family. As to quaternary structure, F-type ATPases have 2 components, F(1) - the catalytic core - and F(0) - the membrane proton channel. F(1) has five subunits: alpha(3), beta(3), gamma(1), delta(1), epsilon(1). F(0) has three main subunits: a(1), b(2) and c(10-14). The alpha and beta chains form an alternating ring which encloses part of the gamma chain. F(1) is attached to F(0) by a central stalk formed by the gamma and epsilon chains, while a peripheral stalk is formed by the delta and b chains.

It localises to the cell inner membrane. Functionally, f(1)F(0) ATP synthase produces ATP from ADP in the presence of a proton or sodium gradient. F-type ATPases consist of two structural domains, F(1) containing the extramembraneous catalytic core and F(0) containing the membrane proton channel, linked together by a central stalk and a peripheral stalk. During catalysis, ATP synthesis in the catalytic domain of F(1) is coupled via a rotary mechanism of the central stalk subunits to proton translocation. This protein is part of the stalk that links CF(0) to CF(1). It either transmits conformational changes from CF(0) to CF(1) or is implicated in proton conduction. In Phenylobacterium zucineum (strain HLK1), this protein is ATP synthase subunit delta.